Here is a 521-residue protein sequence, read N- to C-terminus: Endoplasmic reticulum mannosyl-oligosaccharide 1,2-alpha-mannosidase (521 aa).

At M1 to K8 the chain is on the cytoplasmic side. Residues Y9–V31 form a helical; Signal-anchor for type II membrane protein membrane-spanning segment. At Q32–V521 the chain is on the lumenal side. Residues N114, N167, N300, N342, and N378 are each glycosylated (N-linked (GlcNAc...) asparagine). Cysteines 330 and 373 form a disulfide. The active-site Proton donor is the E387. N499 is a glycosylation site (N-linked (GlcNAc...) asparagine). T504 provides a ligand contact to Ca(2+).

Belongs to the glycosyl hydrolase 47 family. It depends on Ca(2+) as a cofactor.

It is found in the membrane. It catalyses the reaction N(4)-(alpha-D-Man-(1-&gt;2)-alpha-D-Man-(1-&gt;2)-alpha-D-Man-(1-&gt;3)-[alpha-D-Man-(1-&gt;2)-alpha-D-Man-(1-&gt;3)-[alpha-D-Man-(1-&gt;2)-alpha-D-Man-(1-&gt;6)]-alpha-D-Man-(1-&gt;6)]-beta-D-Man-(1-&gt;4)-beta-D-GlcNAc-(1-&gt;4)-beta-D-GlcNAc)-L-asparaginyl-[protein] (N-glucan mannose isomer 9A1,2,3B1,2,3) + 4 H2O = N(4)-(alpha-D-Man-(1-&gt;3)-[alpha-D-Man-(1-&gt;3)-[alpha-D-Man-(1-&gt;6)]-alpha-D-Man-(1-&gt;6)]-beta-D-Man-(1-&gt;4)-beta-D-GlcNAc-(1-&gt;4)-beta-D-GlcNAc)-L-asparaginyl-[protein] (N-glucan mannose isomer 5A1,2) + 4 beta-D-mannose. It carries out the reaction N(4)-(alpha-D-Man-(1-&gt;2)-alpha-D-Man-(1-&gt;2)-alpha-D-Man-(1-&gt;3)-[alpha-D-Man-(1-&gt;3)-[alpha-D-Man-(1-&gt;2)-alpha-D-Man-(1-&gt;6)]-alpha-D-Man-(1-&gt;6)]-beta-D-Man-(1-&gt;4)-beta-D-GlcNAc-(1-&gt;4)-beta-D-GlcNAc)-L-asparaginyl-[protein] (N-glucan mannose isomer 8A1,2,3B1,3) + 3 H2O = N(4)-(alpha-D-Man-(1-&gt;3)-[alpha-D-Man-(1-&gt;3)-[alpha-D-Man-(1-&gt;6)]-alpha-D-Man-(1-&gt;6)]-beta-D-Man-(1-&gt;4)-beta-D-GlcNAc-(1-&gt;4)-beta-D-GlcNAc)-L-asparaginyl-[protein] (N-glucan mannose isomer 5A1,2) + 3 beta-D-mannose. Its pathway is protein modification; protein glycosylation. Its activity is regulated as follows. Inhibited by kifunensine. Functionally, involved in glycoprotein quality control as it is important for the targeting of misfolded glycoproteins for degradation. It trims a single alpha-1,2-linked mannose residue from Man(9)GlcNAc(2) to produce Man(8)GlcNAc(2) with low efficiency. This is Endoplasmic reticulum mannosyl-oligosaccharide 1,2-alpha-mannosidase from Schizosaccharomyces pombe (strain 972 / ATCC 24843) (Fission yeast).